The chain runs to 415 residues: Gamma-glutamyl phosphate reductase (415 aa).

The protein belongs to the gamma-glutamyl phosphate reductase family.

Its subcellular location is the cytoplasm. It catalyses the reaction L-glutamate 5-semialdehyde + phosphate + NADP(+) = L-glutamyl 5-phosphate + NADPH + H(+). Its pathway is amino-acid biosynthesis; L-proline biosynthesis; L-glutamate 5-semialdehyde from L-glutamate: step 2/2. Catalyzes the NADPH-dependent reduction of L-glutamate 5-phosphate into L-glutamate 5-semialdehyde and phosphate. The product spontaneously undergoes cyclization to form 1-pyrroline-5-carboxylate. The chain is Gamma-glutamyl phosphate reductase from Bacteroides fragilis (strain YCH46).